A 207-amino-acid polypeptide reads, in one-letter code: Ribonuclease HII (207 aa).

One can recognise an RNase H type-2 domain in the interval 5–207 (PLIIGVDEAG…APVRALLRPC (203 aa)). D11, E12, and D117 together coordinate a divalent metal cation.

Belongs to the RNase HII family. Mn(2+) is required as a cofactor. The cofactor is Mg(2+).

The protein localises to the cytoplasm. It carries out the reaction Endonucleolytic cleavage to 5'-phosphomonoester.. Functionally, endonuclease that specifically degrades the RNA of RNA-DNA hybrids. This is Ribonuclease HII from Hyphomonas neptunium (strain ATCC 15444).